A 196-amino-acid polypeptide reads, in one-letter code: Orotate phosphoribosyltransferase (196 aa).

Residue 117 to 125 (EDIVTTGLS) participates in 5-phospho-alpha-D-ribose 1-diphosphate binding. Orotate is bound by residues Thr-121 and Arg-149.

Belongs to the purine/pyrimidine phosphoribosyltransferase family. PyrE subfamily. In terms of assembly, homodimer. It depends on Mg(2+) as a cofactor.

The enzyme catalyses orotidine 5'-phosphate + diphosphate = orotate + 5-phospho-alpha-D-ribose 1-diphosphate. The protein operates within pyrimidine metabolism; UMP biosynthesis via de novo pathway; UMP from orotate: step 1/2. Functionally, catalyzes the transfer of a ribosyl phosphate group from 5-phosphoribose 1-diphosphate to orotate, leading to the formation of orotidine monophosphate (OMP). The sequence is that of Orotate phosphoribosyltransferase from Methylorubrum populi (strain ATCC BAA-705 / NCIMB 13946 / BJ001) (Methylobacterium populi).